A 417-amino-acid polypeptide reads, in one-letter code: Aromatic-amino-acid aminotransferase 1 (417 aa).

The residue at position 258 (K258) is an N6-(pyridoxal phosphate)lysine.

This sequence belongs to the class-I pyridoxal-phosphate-dependent aminotransferase family. Homodimer. It depends on pyridoxal 5'-phosphate as a cofactor.

The enzyme catalyses an aromatic L-alpha-amino acid + 2-oxoglutarate = an aromatic oxo-acid + L-glutamate. Its function is as follows. Catalyzes the transamination of phenylalanine, tyrosine and tryptophan. Shows virtually no activity towards aspartic acid, alanine, valine or isoleucine. The chain is Aromatic-amino-acid aminotransferase 1 from Thermococcus litoralis (strain ATCC 51850 / DSM 5473 / JCM 8560 / NS-C).